Reading from the N-terminus, the 125-residue chain is Evasin P672 (125 aa).

An N-terminal signal peptide occupies residues 1-21; that stretch reads MAHKIAIGLVCVLYALHIMSA. Asn-35, Asn-55, Asn-65, Asn-72, Asn-78, Asn-104, Asn-112, and Asn-118 each carry an N-linked (GlcNAc...) asparagine glycan. 3 disulfide bridges follow: Cys-70-Cys-110, Cys-87-Cys-115, and Cys-105-Cys-124.

It localises to the secreted. Salivary chemokine-binding protein which has chemokine-neutralizing activity and binds to host chemokines CCL1, CCL2, CCL3, CCL3L1, CCL7, CCL8, CCL11, CCL12, CCL13, CCL14, CCL15, CCL16, CCL18 and CCL23. Binds to CCL8 with 1:1 stoichiometry and disrupts CCL8 homodimer formation. This is Evasin P672 from Rhipicephalus pulchellus (Yellow backed tick).